We begin with the raw amino-acid sequence, 156 residues long: Cyclic pyranopterin monophosphate synthase (156 aa).

Residues 73–75 and 110–111 each bind substrate; these read LCH and ME. Asp125 is a catalytic residue.

This sequence belongs to the MoaC family. Homohexamer; trimer of dimers.

The enzyme catalyses (8S)-3',8-cyclo-7,8-dihydroguanosine 5'-triphosphate = cyclic pyranopterin phosphate + diphosphate. It functions in the pathway cofactor biosynthesis; molybdopterin biosynthesis. Functionally, catalyzes the conversion of (8S)-3',8-cyclo-7,8-dihydroguanosine 5'-triphosphate to cyclic pyranopterin monophosphate (cPMP). In Pseudomonas putida (strain GB-1), this protein is Cyclic pyranopterin monophosphate synthase.